A 159-amino-acid polypeptide reads, in one-letter code: Protein-export protein SecB (159 aa).

It belongs to the SecB family. As to quaternary structure, homotetramer, a dimer of dimers. One homotetramer interacts with 1 SecA dimer.

It localises to the cytoplasm. Functionally, one of the proteins required for the normal export of preproteins out of the cell cytoplasm. It is a molecular chaperone that binds to a subset of precursor proteins, maintaining them in a translocation-competent state. It also specifically binds to its receptor SecA. The chain is Protein-export protein SecB from Hahella chejuensis (strain KCTC 2396).